A 445-amino-acid polypeptide reads, in one-letter code: Putative H/ACA ribonucleoprotein complex subunit 4 (445 aa).

Residues 1–32 are disordered; that stretch reads MGKKDKRSKLEGDELAEAQQKGSFQLPSSNET. The segment covering 20-32 has biased composition (polar residues); that stretch reads QKGSFQLPSSNET. The active-site Nucleophile is aspartate 113. The 76-residue stretch at 284 to 359 folds into the PUA domain; it reads HKRVVVKDSC…IVAKSKRVIM (76 aa). Residues 407-445 form a disordered region; the sequence is TDKVKKEQEDKEDEEEEEAPKKKSKKAAKKEVSSSSDSE.

Belongs to the pseudouridine synthase TruB family. Component of the small nucleolar ribonucleoprotein particle containing H/ACA-type snoRNAs (H/ACA snoRNPs).

Its subcellular location is the nucleus. The protein resides in the nucleolus. The catalysed reaction is a uridine in RNA = a pseudouridine in RNA. Plays a central role in ribosomal RNA processing. Probable catalytic subunit of H/ACA small nucleolar ribonucleoprotein (H/ACA snoRNP) complex, which catalyzes pseudouridylation of rRNA. This involves the isomerization of uridine such that the ribose is subsequently attached to C5, instead of the normal N1. Pseudouridine ('psi') residues may serve to stabilize the conformation of rRNAs. The polypeptide is Putative H/ACA ribonucleoprotein complex subunit 4 (Caenorhabditis briggsae).